A 305-amino-acid polypeptide reads, in one-letter code: Dihydroorotate dehydrogenase B (NAD(+)), catalytic subunit (305 aa).

FMN is bound by residues S23 and 47–48 (KG). Residues K47 and 71 to 75 (NAIGL) contribute to the substrate site. Residues N101 and N129 each contribute to the FMN site. A substrate-binding site is contributed by N129. The active-site Nucleophile is the C132. Residues K167 and I193 each contribute to the FMN site. 194–195 (NT) contacts substrate. FMN contacts are provided by residues G219, 245–246 (GG), and 267–268 (GT).

The protein belongs to the dihydroorotate dehydrogenase family. Type 1 subfamily. As to quaternary structure, heterotetramer of 2 PyrK and 2 PyrD type B subunits. FMN serves as cofactor.

It localises to the cytoplasm. It carries out the reaction (S)-dihydroorotate + NAD(+) = orotate + NADH + H(+). It functions in the pathway pyrimidine metabolism; UMP biosynthesis via de novo pathway; orotate from (S)-dihydroorotate (NAD(+) route): step 1/1. In terms of biological role, catalyzes the conversion of dihydroorotate to orotate with NAD(+) as electron acceptor. In Geobacter metallireducens (strain ATCC 53774 / DSM 7210 / GS-15), this protein is Dihydroorotate dehydrogenase B (NAD(+)), catalytic subunit (pyrD).